A 327-amino-acid chain; its full sequence is Malate dehydrogenase (327 aa).

Position 12-18 (12-18) interacts with NAD(+); sequence GAAGQIA. Arg93 and Arg99 together coordinate substrate. NAD(+) contacts are provided by residues Asn106, Gln113, and 130–132; that span reads VGN. Substrate is bound by residues Asn132 and Arg163. His188 functions as the Proton acceptor in the catalytic mechanism.

It belongs to the LDH/MDH superfamily. MDH type 2 family.

It catalyses the reaction (S)-malate + NAD(+) = oxaloacetate + NADH + H(+). Functionally, catalyzes the reversible oxidation of malate to oxaloacetate. The polypeptide is Malate dehydrogenase (Acidiphilium cryptum (strain JF-5)).